Consider the following 492-residue polypeptide: Aerolysin (492 aa).

The signal sequence occupies residues 1 to 21 (MKALKITGLSLIISATLAAQT). 2 disulfides stabilise this stretch: cysteine 42–cysteine 98 and cysteine 182–cysteine 187. An interaction with host N-linked glycan region spans residues 68–84 (WQISGLANNWVILGPGY). Residues 256 to 288 (YGLSEKVSTKNKFKWPLVGETEVSIEIAANQSW) form a part of the transmembrane beta-barrel after proteolytic activation of the toxin and insertion into the host membrane region. The segment at 346 to 355 (RWGGNAWHTH) is interaction with glycans from host GPI-anchor. Residues 446–492 (GSDSKVRRTRSVDGANTGLKLDIPLDAQELAELGFENVTLSVTPARN) constitute a propeptide that is removed on maturation.

The protein belongs to the aerolysin family. Homodimer in solution; homoheptamer in the host membrane. After binding to GPI-anchored proteins in target membranes and proteolytic removal of the C-terminal propeptide, the protein assembles into a heptameric pre-pore complex. A further conformation change leads to insertion into the host membrane. In terms of processing, proteolytic cleavage and subsequent release of the propeptide trigger a major conformation change, leading to the formation of a heptameric pre-pore that then inserts into the host membrane.

The protein localises to the secreted. It is found in the host cell membrane. Its function is as follows. Secreted, cytolytic toxin that forms pores in host membranes after proteolytic removal of a C-terminal propeptide, leading to destruction of the membrane permeability barrier and cell death. The pores are formed by transmembrane beta-strands and are approximately 3 nm in diameter. The chain is Aerolysin (aerA) from Aeromonas enteropelogenes (Aeromonas trota).